Reading from the N-terminus, the 160-residue chain is MSSIPISTEGYDRLMKELERLKSERPAIIQAIKEAREEGDLKENAGYDAARERQGMLEARISYIESRMAQFNVINLDSLSGDKVMFGATVEIEDLDSGEAKRYTLLGPDEADYAQGTISVLSPVARALLGKEEGDEIVVDAPRGRISYEIISVAFEGARR.

Residues 11–38 are a coiled coil; that stretch reads YDRLMKELERLKSERPAIIQAIKEAREE.

It belongs to the GreA/GreB family.

Functionally, necessary for efficient RNA polymerase transcription elongation past template-encoded arresting sites. The arresting sites in DNA have the property of trapping a certain fraction of elongating RNA polymerases that pass through, resulting in locked ternary complexes. Cleavage of the nascent transcript by cleavage factors such as GreA or GreB allows the resumption of elongation from the new 3'terminus. GreA releases sequences of 2 to 3 nucleotides. The chain is Transcription elongation factor GreA from Nitratidesulfovibrio vulgaris (strain DSM 19637 / Miyazaki F) (Desulfovibrio vulgaris).